Here is a 263-residue protein sequence, read N- to C-terminus: Ribosomal RNA large subunit methyltransferase E (263 aa).

The interval 1 to 34 (MSSAEGPKSGGGSKGSKSEASSRVRGSAPTGSRD) is disordered. Residues G102, W104, D126, D142, and D166 each coordinate S-adenosyl-L-methionine. K206 acts as the Proton acceptor in catalysis.

The protein belongs to the class I-like SAM-binding methyltransferase superfamily. RNA methyltransferase RlmE family.

It is found in the cytoplasm. It catalyses the reaction uridine(2552) in 23S rRNA + S-adenosyl-L-methionine = 2'-O-methyluridine(2552) in 23S rRNA + S-adenosyl-L-homocysteine + H(+). Its function is as follows. Specifically methylates the uridine in position 2552 of 23S rRNA at the 2'-O position of the ribose in the fully assembled 50S ribosomal subunit. The polypeptide is Ribosomal RNA large subunit methyltransferase E (Rhodospirillum rubrum (strain ATCC 11170 / ATH 1.1.1 / DSM 467 / LMG 4362 / NCIMB 8255 / S1)).